The primary structure comprises 344 residues: MKLAILGAGCYRTHAASGITNFSRACEVAEMVGKPEIAMTHSTITMGAELKELAGVDEVVVADPVFDNQFTVIDDFAYEDVIEAHKEDPEKIMPQIREKVNEVAKELPKPPEGAIHFTHPEDLGFEITTDDREAVADADFIMTWFPKGDMQPGIINKFIDDIKPGAIVTHACTIPTTKFYKIFEEKHGDLVTRPETLNVTSYHPGAVPEMKGQVYIAEGYASEEAINTLFELGQKARGNAYKLPAELLGPVCDMCSALTAITYAGILTYRDSVTQVLGAPAGFAQMMAKESLEQLTALMDKVGIDKMEESLDPGALLGTADSMNFGASAEILPTVFEVLEKRKK.

This sequence belongs to the HMD family.

The catalysed reaction is 5,10-methenyl-5,6,7,8-tetrahydromethanopterin + H2 = 5,10-methylenetetrahydromethanopterin + H(+). Its pathway is one-carbon metabolism; methanogenesis from CO(2); 5,10-methylene-5,6,7,8-tetrahydromethanopterin from 5,10-methenyl-5,6,7,8-tetrahydromethanopterin (hydrogen route): step 1/1. In terms of biological role, catalyzes the reversible reduction of methenyl-H(4)MPT(+) to methylene-H(4)MPT. The polypeptide is 5,10-methenyltetrahydromethanopterin hydrogenase (hmd) (Methanothermobacter thermautotrophicus (Methanobacterium thermoformicicum)).